The sequence spans 448 residues: Probable alpha-galactosidase B (448 aa).

A signal peptide spans 1–23; sequence MSRFHLPLAAAVVLVSCLWSANA. 2 disulfides stabilise this stretch: cysteine 46-cysteine 78 and cysteine 128-cysteine 158. The Nucleophile role is filled by aspartate 156. Residues asparagine 163 and asparagine 181 are each glycosylated (N-linked (GlcNAc...) asparagine). Position 226–230 (226–230) interacts with substrate; it reads EWGQA. N-linked (GlcNAc...) asparagine glycosylation occurs at asparagine 237. The active-site Proton donor is aspartate 248.

It belongs to the glycosyl hydrolase 27 family.

Its subcellular location is the secreted. The enzyme catalyses Hydrolysis of terminal, non-reducing alpha-D-galactose residues in alpha-D-galactosides, including galactose oligosaccharides, galactomannans and galactolipids.. Hydrolyzes a variety of simple alpha-D-galactoside as well as more complex molecules such as oligosaccharides and polysaccharides. This Aspergillus clavatus (strain ATCC 1007 / CBS 513.65 / DSM 816 / NCTC 3887 / NRRL 1 / QM 1276 / 107) protein is Probable alpha-galactosidase B (aglB).